The sequence spans 404 residues: MCSIGEDDFGDEGGTHAMLPSCSETGIVLRAGDCSKCGQSSQQLYKLNFRSAECSECFLKYVRHKFRAALGAAKVLPRNAEILLVIDGSSESLVLLDMVHFAQTQNTFKRLHCNARVLYVDAHCSPIKEEESPLLALNELQRRYEPFEFYVIQLNGDPQSLQLLKDYTVRQLDSILDQFNSSTSRQDYMQQKRKFLVGGVAMKLKCSHVFEPSISPSLATQLLTSVALGRGASVALDVALLDDRLMGDVKLLRPLKDLNDQEVQFYVHAKELKAFRVDDPSHYPLSGGSLQSLTRDFVANLQLNYASTVSTVFRTGDKIAPKRNSKEIMASYCALCQSLLDNNISDTLLAIEYSRAVSEVGVELKMKSSCDVLEQRVLERLNEKEELCHACRNIQAELSSGTLI.

The protein belongs to the CTU2/NCS2 family.

It localises to the cytoplasm. It functions in the pathway tRNA modification; 5-methoxycarbonylmethyl-2-thiouridine-tRNA biosynthesis. Functionally, plays a central role in 2-thiolation of mcm(5)S(2)U at tRNA wobble positions of tRNA(Lys), tRNA(Glu) and tRNA(Gln). May act by forming a heterodimer with NCS6/CTU1 that ligates sulfur from thiocarboxylated URM1 onto the uridine of tRNAs at wobble position. The chain is Cytoplasmic tRNA 2-thiolation protein 2 from Drosophila mojavensis (Fruit fly).